The sequence spans 292 residues: NAD kinase (292 aa).

The active-site Proton acceptor is the aspartate 73. NAD(+) is bound by residues 73-74, 147-148, histidine 158, arginine 175, aspartate 177, 188-193, and glutamine 247; these read DG, NE, and TAYSLS.

Belongs to the NAD kinase family. A divalent metal cation is required as a cofactor.

Its subcellular location is the cytoplasm. It carries out the reaction NAD(+) + ATP = ADP + NADP(+) + H(+). Involved in the regulation of the intracellular balance of NAD and NADP, and is a key enzyme in the biosynthesis of NADP. Catalyzes specifically the phosphorylation on 2'-hydroxyl of the adenosine moiety of NAD to yield NADP. This Serratia proteamaculans (strain 568) protein is NAD kinase.